The primary structure comprises 71 residues: Putative RNA-binding regulatory peptide (71 aa).

In terms of assembly, interacts with IGF2BP1 (via KH3 and KH4 domains); the interaction results in increased binding of IGF2BP1 to N6-methyladenosine (m6A)-containing mRNAs. As to expression, detected in colon (at protein level).

Enhances binding of IGF2BP1 to N6-methyladenosine (m6A)-containing mRNAs, thereby contributing to increased mRNA stability. Also increases the interaction of IGF2BP1 with RNA stabilizers ELAVL1/HUR, MATR3 and PABPC1, and increases the interaction of RNA stabilizers ELAVL1/HUR, MATR3 and PABPC1 with m6A-containing mRNAs. Contributes to MYC stability by enhancing binding of IGF2BP1 to m6A-containing MYC mRNAs and increasing recruitment of RNA stabilizing proteins to m6A-containing MYC mRNAs. The protein is Putative RNA-binding regulatory peptide of Homo sapiens (Human).